Here is a 1001-residue protein sequence, read N- to C-terminus: Chloride channel protein clh-3 (1001 aa).

Topologically, residues 1–48 (MGIGTKILSKIEKNKTSDGLTIPLTPTTQKQSSSWCSFESIKTFFRTV) are cytoplasmic. Transmembrane regions (helical) follow at residues 49 to 85 (IRDWIFLALLGFIMASLSFGMDYAILNLQNGQMRLFD) and 91 to 117 (HFTLAYLVWVGYVVGLILLSAVCAHYI). The short motif at 123–127 (GSGIP) is the Selectivity filter part_1 element. Residue Ser124 participates in chloride binding. Positions 126–133 (IPEMKTIL) form an intramembrane region, helical. Helical transmembrane passes span 142-160 (LSVRTLLSKMIGLTLSLGS) and 167-185 (EGPFVHVASVVASQLTRLV). The short motif at 165 to 169 (GKEGP) is the Selectivity filter part_2 element. 2 intramembrane regions (helical) span residues 202 to 214 (MLAAGCAVGVACT) and 218 to 226 (PIGGVLFSI). 5 helical membrane passes run 238-258 (YWRGFFAATCSATLFRILRMF), 285-313 (LPIFALIGLVCGLAGSIFVYLHRRTVLFL), 322-341 (IFQKYWLIYPIFIATFISSL), 405-425 (YSPFVTLSSFQVVYFFLAILA), and 433-456 (GIFMPVFVLGAAFGRLVGEGVFSL). The short motif at 433–437 (GIFMP) is the Selectivity filter part_3 element. Ile434 and Phe435 together coordinate chloride. The segment at residues 473-487 (GVYAVVGAAAFCGAV) is an intramembrane region (helical). The note=Loop between two helices intramembrane region spans 488–489 (TH). Residues 490–501 (TVSVAVIVFELT) constitute an intramembrane region (helical). Residues 502–506 (GQLCH) constitute an intramembrane region (note=Loop between two helices). The chain crosses the membrane as a helical span at residues 507–524 (LLPVMIAVLIANAVASYL). The Cytoplasmic segment spans residues 525 to 1001 (QPSIYDSIIR…LPDDVHDEKF (477 aa)). Tyr529 provides a ligand contact to chloride. Residues 560 to 619 (MISPLVYIAKDSTVGDIKRALETKTRIRAFPLVENMESLALVGSVSRSQLQRYVDSQIGT) form the CBS 1 domain. The stretch at 625-657 (EATRRIKQRLEDEESERKRREESKSDDTEDSLE) forms a coiled coil. Positions 634–650 (LEDEESERKRREESKSD) are enriched in basic and acidic residues. Residues 634-662 (LEDEESERKRREESKSDDTEDSLETTGAG) form a disordered region. Phosphoserine; by gck-3 is present on residues Ser742 and Ser747. The CBS 2 domain occupies 788-845 (IDSTPFQLSEYTSLFKAHSLFSLLGLNRAYVTKKGQLIGVVALKELRLAIEYLQSGKV).

Belongs to the chloride channel (TC 2.A.49) family. As to quaternary structure, isoform a interacts (via RFLI motif) with gck-3 (via C-terminus). Post-translationally, phosphorylated by gck-3; phosphorylation at both Ser-742 and Ser-747 is required to inhibit channel activity. Dephosphorylated by gsp-1/2 during cell swelling and oocyte meiotic maturation, which results in channel activation. As to expression, expressed in excretory cell, 4 anterior epithelial cells of the intestine, hermaphrodite-specific neurons and enteric muscles. Expressed also in vulva and uterus. Isoform a is expressed in oocytes (at protein level).

It is found in the cell membrane. Its function is as follows. Voltage-gated chloride channel. Insensitive to depolarizing conditioning voltages, requires low voltages for activation, insensitive to chloride levels and has a mild sensitivity to low pH. Channel gating properties are conferred by the cytoplasmic C-terminus. Plays a role in egg laying by modulating hermaphrodite-specific neurons (HSN) excitability and the ovulatory contractions of gap-junction-coupled gonadal sheath cells. When active, may prevent tubular formation of the excretory canals. Activated during oocyte meiotic maturation and by membrane hyperpolarization and cell swelling. Inhibited by Zn(2+) and to a lesser extent by Cd(2+). Functionally, voltage-gated chloride channel. Sensitive to depolarizing conditioning voltages, requires stronger voltages for activation and activation is slower, is inhibited by low concentrations of chloride and is activated by low pH. Channel gating properties are conferred by the cytoplasmic C-terminus. This chain is Chloride channel protein clh-3, found in Caenorhabditis elegans.